Reading from the N-terminus, the 449-residue chain is Anthocyanidin 3-O-glucosyltransferase 1 (449 aa).

H3 functions as the Proton acceptor in the catalytic mechanism. Position 3 (H3) interacts with an anthocyanidin. D103 acts as the Charge relay in catalysis. UDP-alpha-D-glucose contacts are provided by T125, A325, Q327, H342, W345, N346, S347, and E350. Position 365 (A365) interacts with an anthocyanidin. Residues E366 and Q367 each contribute to the UDP-alpha-D-glucose site.

The protein belongs to the UDP-glycosyltransferase family. Expressed in cotyledons and roots, but not in leaves.

It carries out the reaction an anthocyanidin + UDP-alpha-D-glucose + H(+) = an anthocyanidin 3-O-beta-D-glucoside + UDP. It functions in the pathway pigment biosynthesis; anthocyanin biosynthesis. In the presence of other necessary color factors, this glycosylation reaction allows the accumulation of anthocyanin pigments. The protein is Anthocyanidin 3-O-glucosyltransferase 1 (GT1) of Manihot esculenta (Cassava).